The chain runs to 558 residues: Putative F-box/LRR-repeat protein R542 (558 aa).

An F-box domain is found at M1–F47. LRR repeat units lie at residues K73 to F105, C139 to C176, C177 to G220, L251 to G284, C285 to Y317, C329 to Y361, V369 to D395, C420 to Y444, C445 to Y477, and S481 to T508.

The polypeptide is Putative F-box/LRR-repeat protein R542 (Acanthamoeba polyphaga mimivirus (APMV)).